The sequence spans 275 residues: Protein MGF 110-11L (275 aa).

A helical transmembrane segment spans residues 5 to 25; sequence LGLLLGYSVLILTHELPDLSA. A glycan (N-linked (GlcNAc...) asparagine; by host) is linked at N61. 2 consecutive transmembrane segments (helical) span residues 127–147 and 149–169; these read HCCF…FAYH and NLHL…IWLS.

Belongs to the asfivirus MGF 110 family.

It is found in the host membrane. Functionally, plays a role in virus cell tropism, and may be required for efficient virus replication in macrophages. This African swine fever virus (isolate Pig/Kenya/KEN-50/1950) (ASFV) protein is Protein MGF 110-11L.